The chain runs to 338 residues: Lipoate-protein ligase A (338 aa).

In terms of domain architecture, BPL/LPL catalytic spans 29–216 (PATQRVLFLW…AFFVHYGERV (188 aa)). ATP contacts are provided by residues Arg-71, 76–79 (GAVF), and Lys-134. Residue Lys-134 coordinates (R)-lipoate.

It belongs to the LplA family. As to quaternary structure, monomer.

It is found in the cytoplasm. It catalyses the reaction L-lysyl-[lipoyl-carrier protein] + (R)-lipoate + ATP = N(6)-[(R)-lipoyl]-L-lysyl-[lipoyl-carrier protein] + AMP + diphosphate + H(+). The protein operates within protein modification; protein lipoylation via exogenous pathway; protein N(6)-(lipoyl)lysine from lipoate: step 1/2. Its pathway is protein modification; protein lipoylation via exogenous pathway; protein N(6)-(lipoyl)lysine from lipoate: step 2/2. Functionally, catalyzes both the ATP-dependent activation of exogenously supplied lipoate to lipoyl-AMP and the transfer of the activated lipoyl onto the lipoyl domains of lipoate-dependent enzymes. The sequence is that of Lipoate-protein ligase A from Salmonella newport (strain SL254).